Consider the following 453-residue polypeptide: DDB1- and CUL4-associated factor 12 (453 aa).

Positions 1–12 are enriched in basic residues; that stretch reads MARKAVSRKRKA. Positions 1–34 are disordered; that stretch reads MARKAVSRKRKASASPGAGSDAQGPQFGWDHSLH. A required for nuclear location and interaction with MOV10 region spans residues 1–38; the sequence is MARKAVSRKRKASASPGAGSDAQGPQFGWDHSLHKRKR. Phosphoserine is present on Ser15. WD repeat units lie at residues 138–178, 182–220, 250–289, and 338–375; these read QQGC…PVCV, GHKD…LTKS, PDNC…SKLL, and ERGS…FLEE.

Belongs to the WD repeat DCAF12 family. Component of the DCX(DCAF12) E3 ubiquitin ligase complex, at least composed of CUL4 (CUL4A or CUL4B), DDB1, DCAF12 and RBX1.

It is found in the cytoplasm. It localises to the cytoskeleton. The protein localises to the microtubule organizing center. Its subcellular location is the centrosome. The protein resides in the nucleus. It participates in protein modification; protein ubiquitination. Functionally, substrate-recognition component of a DCX (DDB1-CUL4-X-box) E3 ubiquitin-protein ligase complex of the DesCEND (destruction via C-end degrons) pathway, which recognizes a C-degron located at the extreme C terminus of target proteins, leading to their ubiquitination and degradation. The C-degron recognized by the DesCEND pathway is usually a motif of less than ten residues and can be present in full-length proteins, truncated proteins or proteolytically cleaved forms. The DCX(DCAF12) complex specifically recognizes proteins with a diglutamate (Glu-Glu) at the C-terminus, such as MAGEA3, MAGEA6 and CCT5, leading to their ubiquitination and degradation. Ubiquitination of MAGEA3, MAGEA6 by DCX(DCAF12) complex is required for starvation-induced autophagy. Also directly recognizes the C-terminal glutamate-leucine (Glu-Leu) degron as an alternative degron in proteins such as MOV10, leading to their ubiquitination and degradation. Controls the protein level of MOV10 during spermatogenesis and in T cells, especially after their activation. This is DDB1- and CUL4-associated factor 12 from Mus musculus (Mouse).